Consider the following 187-residue polypeptide: Ribonuclease M5 (187 aa).

One can recognise a Toprim domain in the interval 5-88; it reads KEVIVVEGKD…AFLPRKAGVP (84 aa). The Mg(2+) site is built by glutamate 11, aspartate 57, and aspartate 59.

This sequence belongs to the ribonuclease M5 family. Mg(2+) is required as a cofactor.

The protein localises to the cytoplasm. The catalysed reaction is Endonucleolytic cleavage of RNA, removing 21 and 42 nucleotides, respectively, from the 5'- and 3'-termini of a 5S-rRNA precursor.. Functionally, required for correct processing of both the 5' and 3' ends of 5S rRNA precursor. Cleaves both sides of a double-stranded region yielding mature 5S rRNA in one step. The sequence is that of Ribonuclease M5 from Lactiplantibacillus plantarum (strain ATCC BAA-793 / NCIMB 8826 / WCFS1) (Lactobacillus plantarum).